The sequence spans 410 residues: Peptidase T (410 aa).

H79 lines the Zn(2+) pocket. Residue D81 is part of the active site. D142 is a Zn(2+) binding site. E176 functions as the Proton acceptor in the catalytic mechanism. Zn(2+) contacts are provided by E177, D199, and H381.

This sequence belongs to the peptidase M20B family. The cofactor is Zn(2+).

It localises to the cytoplasm. The enzyme catalyses Release of the N-terminal residue from a tripeptide.. Its function is as follows. Cleaves the N-terminal amino acid of tripeptides. The sequence is that of Peptidase T from Listeria monocytogenes serotype 4a (strain HCC23).